Consider the following 458-residue polypeptide: Argininosuccinate lyase (458 aa).

It belongs to the lyase 1 family. Argininosuccinate lyase subfamily.

It is found in the cytoplasm. The catalysed reaction is 2-(N(omega)-L-arginino)succinate = fumarate + L-arginine. It functions in the pathway amino-acid biosynthesis; L-arginine biosynthesis; L-arginine from L-ornithine and carbamoyl phosphate: step 3/3. The chain is Argininosuccinate lyase from Neisseria gonorrhoeae (strain ATCC 700825 / FA 1090).